A 229-amino-acid chain; its full sequence is Putative germin-like protein 3-4 (229 aa).

An N-terminal signal peptide occupies residues 1–31 (MEHSFKTITAGVVFVVLLLQQAPVLIRATDA). A disulfide bridge links Cys-38 with Cys-53. The Cupin type-1 domain maps to 67–219 (SKIATGGDVN…ALRVDTGVVE (153 aa)). N-linked (GlcNAc...) asparagine glycosylation is found at Asn-80 and Asn-83. Mn(2+) is bound by residues His-116, His-118, Glu-123, and His-165.

The protein belongs to the germin family. In terms of assembly, oligomer (believed to be a pentamer but probably hexamer).

The protein localises to the secreted. It localises to the extracellular space. Its subcellular location is the apoplast. Functionally, may play a role in plant defense. Probably has no oxalate oxidase activity even if the active site is conserved. The sequence is that of Putative germin-like protein 3-4 from Oryza sativa subsp. japonica (Rice).